We begin with the raw amino-acid sequence, 266 residues long: Interleukin-1 beta (266 aa).

The propeptide occupies 1–114 (MAAVPELTSE…KTDADNFMSD (114 aa)).

The protein belongs to the IL-1 family. Monomer. In its precursor form, weakly interacts with full-length MEFV; the mature cytokine does not interact at all. Interacts with integrins ITGAV:ITGBV and ITGA5:ITGB1; integrin-binding is required for IL1B signaling. Interacts with cargo receptor TMED10; the interaction is direct and is required for the secretion of IL1B mature form. Interacts with HSP90AB1; the interaction facilitates cargo translocation into the ERGIC. Interacts with HSP90B1; the interaction facilitates cargo translocation into the ERGIC.

The protein resides in the cytoplasm. It is found in the cytosol. The protein localises to the secreted. It localises to the lysosome. Its subcellular location is the extracellular exosome. Functionally, potent pro-inflammatory cytokine. Initially discovered as the major endogenous pyrogen, induces prostaglandin synthesis, neutrophil influx and activation, T-cell activation and cytokine production, B-cell activation and antibody production, and fibroblast proliferation and collagen production. Promotes Th17 differentiation of T-cells. Synergizes with IL12/interleukin-12 to induce IFNG synthesis from T-helper 1 (Th1) cells. Plays a role in angiogenesis by inducing VEGF production synergistically with TNF and IL6. Involved in transduction of inflammation downstream of pyroptosis: its mature form is specifically released in the extracellular milieu by passing through the gasdermin-D (GSDMD) pore. This chain is Interleukin-1 beta (IL1B), found in Canis lupus familiaris (Dog).